We begin with the raw amino-acid sequence, 265 residues long: Thioredoxin-related transmembrane protein 2 homolog (265 aa).

Residues 1–32 (MLIPRLDEVRRALTAFHFFNTLLALAFPVIRS) form the signal peptide. Over 33–96 (TSLCDYVFAV…KIAGMFLFIR (64 aa)) the chain is Extracellular. Residues 97–117 (ADILPGIIYILACLIVTVLFP) form a helical membrane-spanning segment. Over 118 to 265 (EPVYNGPEQV…KKGAKAKKED (148 aa)) the chain is Cytoplasmic. The 105-residue stretch at 126–230 (QVTYFQGEQL…RPLVNDSRRA (105 aa)) folds into the Thioredoxin domain. The Di-lysine motif motif lies at 262–265 (KKED).

The protein localises to the membrane. The sequence is that of Thioredoxin-related transmembrane protein 2 homolog from Caenorhabditis elegans.